The following is a 346-amino-acid chain: Structure-specific endonuclease subunit SLX1 (346 aa).

Residues 22–105 (DFYGVYLLRS…QHPYQTRHIK (84 aa)) form the GIY-YIG domain. The SLX1-type zinc finger occupies 216–306 (CFICNETIDY…TPLQGKCLSC (91 aa)).

It belongs to the SLX1 family. Forms a heterodimer with SLX4. Requires a divalent metal cation as cofactor.

It is found in the nucleus. Catalytic subunit of the SLX1-SLX4 structure-specific endonuclease that resolves DNA secondary structures generated during DNA repair and recombination. Has endonuclease activity towards branched DNA substrates, introducing single-strand cuts in duplex DNA close to junctions with ss-DNA. This chain is Structure-specific endonuclease subunit SLX1, found in Debaryomyces hansenii (strain ATCC 36239 / CBS 767 / BCRC 21394 / JCM 1990 / NBRC 0083 / IGC 2968) (Yeast).